A 661-amino-acid polypeptide reads, in one-letter code: UvrABC system protein B (661 aa).

Residues A25 to R182 enclose the Helicase ATP-binding domain. Position 38-45 (G38–T45) interacts with ATP. A Beta-hairpin motif is present at residues Y91–I114. Residues Q430–I592 form the Helicase C-terminal domain. One can recognise a UVR domain in the interval K621 to A656.

This sequence belongs to the UvrB family. In terms of assembly, forms a heterotetramer with UvrA during the search for lesions. Interacts with UvrC in an incision complex.

The protein localises to the cytoplasm. Its function is as follows. The UvrABC repair system catalyzes the recognition and processing of DNA lesions. A damage recognition complex composed of 2 UvrA and 2 UvrB subunits scans DNA for abnormalities. Upon binding of the UvrA(2)B(2) complex to a putative damaged site, the DNA wraps around one UvrB monomer. DNA wrap is dependent on ATP binding by UvrB and probably causes local melting of the DNA helix, facilitating insertion of UvrB beta-hairpin between the DNA strands. Then UvrB probes one DNA strand for the presence of a lesion. If a lesion is found the UvrA subunits dissociate and the UvrB-DNA preincision complex is formed. This complex is subsequently bound by UvrC and the second UvrB is released. If no lesion is found, the DNA wraps around the other UvrB subunit that will check the other stand for damage. This chain is UvrABC system protein B, found in Rickettsia massiliae (strain Mtu5).